Consider the following 431-residue polypeptide: Enolase (431 aa).

Residue Q167 participates in (2R)-2-phosphoglycerate binding. E209 (proton donor) is an active-site residue. D246, E287, and D314 together coordinate Mg(2+). Residues K339, R368, S369, and K390 each coordinate (2R)-2-phosphoglycerate. Residue K339 is the Proton acceptor of the active site.

The protein belongs to the enolase family. It depends on Mg(2+) as a cofactor.

It is found in the cytoplasm. The protein resides in the secreted. Its subcellular location is the cell surface. The catalysed reaction is (2R)-2-phosphoglycerate = phosphoenolpyruvate + H2O. Its pathway is carbohydrate degradation; glycolysis; pyruvate from D-glyceraldehyde 3-phosphate: step 4/5. Catalyzes the reversible conversion of 2-phosphoglycerate (2-PG) into phosphoenolpyruvate (PEP). It is essential for the degradation of carbohydrates via glycolysis. The sequence is that of Enolase from Prochlorococcus marinus (strain MIT 9303).